The chain runs to 86 residues: YcgL domain-containing protein XC_4086 (86 aa).

A YcgL domain is found at M1–C83.

The sequence is that of YcgL domain-containing protein XC_4086 from Xanthomonas campestris pv. campestris (strain 8004).